A 462-amino-acid chain; its full sequence is NAD-capped RNA hydrolase NUDT12 (462 aa).

3 ANK repeats span residues 11–40 (EIVTQFHCSAAEGDIAKLTGILSHSPSLLN), 45–74 (NGWTALMYAARNGHPEIVQFLLEKGCDRSI), and 78–98 (SRQTALDIAVFWGYKHIANLL). The residue at position 185 (Lys-185) is an N6-succinyllysine. The Zn(2+) site is built by Cys-284 and Cys-287. At Lys-292 the chain carries N6-succinyllysine. Zn(2+) contacts are provided by Cys-302 and Cys-307. Residues Tyr-318, 354–356 (AGF), Glu-370, Glu-374, and Glu-415 each bind substrate. Residues 319-453 (PRVDPVVIMQ…SRAIAHQLIK (135 aa)) enclose the Nudix hydrolase domain. Mg(2+)-binding residues include Ala-354, Glu-370, Glu-374, and Glu-415. The Nudix box signature appears at 355 to 376 (GFIEPGETIEDAVRREVEEESG). A Microbody targeting signal motif is present at residues 460–462 (PNL).

The protein belongs to the Nudix hydrolase family. NudC subfamily. As to quaternary structure, homodimer. Homodimerization is essential for its catalytic activity and protein stability. Interacts (via ANK repeats) with BLMH. Mg(2+) serves as cofactor. The cofactor is Zn(2+).

Its subcellular location is the cytoplasm. It is found in the peroxisome. It localises to the cytoplasmic granule. The catalysed reaction is a 5'-end NAD(+)-phospho-ribonucleoside in mRNA + H2O = a 5'-end phospho-adenosine-phospho-ribonucleoside in mRNA + beta-nicotinamide D-ribonucleotide + 2 H(+). It carries out the reaction NAD(+) + H2O = beta-nicotinamide D-ribonucleotide + AMP + 2 H(+). The enzyme catalyses NADH + H2O = reduced beta-nicotinamide D-ribonucleotide + AMP + 2 H(+). It catalyses the reaction NADPH + H2O = reduced beta-nicotinamide D-ribonucleotide + adenosine 2',5'-bisphosphate + 2 H(+). In terms of biological role, mRNA decapping enzyme that specifically removes the nicotinamide adenine dinucleotide (NAD) cap from a subset of mRNAs by hydrolyzing the diphosphate linkage to produce nicotinamide mononucleotide (NMN) and 5' monophosphate mRNA. The NAD-cap is present at the 5'-end of some RNAs; in contrast to the canonical N7 methylguanosine (m7G) cap, the NAD cap promotes mRNA decay. Preferentially acts on NAD-capped transcripts in response to nutrient stress. Also acts on free nicotinamide adenine dinucleotide molecules: hydrolyzes NAD(H) into NMN(H) and AMP, and NADPH into NMNH and 2',5'-ADP. May act to regulate the concentration of peroxisomal nicotinamide nucleotide cofactors required for oxidative metabolism in this organelle. Regulates the levels of circadian clock components PER1, PER2, PER3 and CRY2 in the liver. The protein is NAD-capped RNA hydrolase NUDT12 of Pongo abelii (Sumatran orangutan).